Here is a 232-residue protein sequence, read N- to C-terminus: Clarin-1 (232 aa).

A helical membrane pass occupies residues 8 to 28 (IIFCMAGVLSFLCALGVVTAV). The N-linked (GlcNAc...) asparagine glycan is linked to Asn-48. 2 consecutive transmembrane segments (helical) span residues 101-121 (IILFSMILVVLTMVGTAFFMY) and 135-155 (LGLYLVSFISGSCGCLVMILF). N-linked (GlcNAc...) asparagine glycosylation is present at Asn-184. Residues 186 to 206 (TTSFWVVFICFFVHFLNGLLI) form a helical membrane-spanning segment.

It belongs to the clarin family.

It is found in the cell membrane. Functionally, may have a role in the excitatory ribbon synapse junctions between hair cells and cochlear ganglion cells and presumably also in analogous synapses within the retina. The sequence is that of Clarin-1 (Clrn1) from Mus musculus (Mouse).